Consider the following 385-residue polypeptide: Putative transporter YthQ (385 aa).

A run of 8 helical transmembrane segments spans residues 24–44 (AVID…FVIY), 67–87 (WLYA…FLME), 106–128 (YALL…IVLP), 133–155 (SVLI…HIFF), 176–193 (TLVR…IVFT), 197–214 (LLAL…IRSL), 304–324 (AFTV…LLVY), and 365–385 (ILHY…LLFT).

The protein resides in the cell membrane. In Bacillus subtilis (strain 168), this protein is Putative transporter YthQ (ythQ).